Consider the following 239-residue polypeptide: MGSTSDPSPSIITVAAEAPVTAERKQNLHLQEQLAKPYVARALAAVDPAHPNGTEGHEHHNMSVLQQRAAFFDRNNDGIVYPWETYQGFRAVGFGVLTSILGGFLINLGLSYRSQPSWIPSPVLSIHIKNIHRCKHGSDTESYDTEGRFEPSKFDAIFSKYALTQPDALTSEEISTMLQVNRNLLDFIGWVASIAEWRLLYQIGKDEDGLLHKETIRGAFDGSLFERLEKDRASRTKIV.

Position 2 is an N-acetylglycine (glycine 2). The EF-hand domain maps to 60-95; it reads HNMSVLQQRAAFFDRNNDGIVYPWETYQGFRAVGFG. 4 residues coordinate Ca(2+): aspartate 73, asparagine 75, aspartate 77, and glutamate 84. The Proline-knot signature appears at 116–125; sequence PSWIPSPVLS.

This sequence belongs to the caleosin family. Homodimer. The cofactor is heme b. It depends on Ca(2+) as a cofactor. In terms of tissue distribution, expressed in pollen (at protein level). Not expressed in leaf, root, stem, tepal, ovary, style, filament or stigma (at protein level).

Its subcellular location is the lipid droplet. It is found in the microsome membrane. It carries out the reaction RH + ROOH = ROH + ROH.. Its function is as follows. Calcium-binding peroxygenase involved in the degradation of storage lipid in oil bodies. The protein is Peroxygenase of Lilium longiflorum (Trumpet lily).